The primary structure comprises 661 residues: UvrABC system protein B (661 aa).

Positions 25-414 (AGLNSKKRSQ…DTVVELIIRP (390 aa)) constitute a Helicase ATP-binding domain. 38–45 (GITGSGKT) provides a ligand contact to ATP. The Beta-hairpin signature appears at 91–114 (YYDYYQPEAYIARTDTFIEKDSSI). One can recognise a Helicase C-terminal domain in the interval 430–592 (QVEDLIGEIQ…IIPKTINRAI (163 aa)). The region spanning 621–656 (KAHIEKLKKDMLKAASNLEFEQAAKLRDQLKTLEEA) is the UVR domain.

Belongs to the UvrB family. As to quaternary structure, forms a heterotetramer with UvrA during the search for lesions. Interacts with UvrC in an incision complex.

The protein resides in the cytoplasm. Functionally, the UvrABC repair system catalyzes the recognition and processing of DNA lesions. A damage recognition complex composed of 2 UvrA and 2 UvrB subunits scans DNA for abnormalities. Upon binding of the UvrA(2)B(2) complex to a putative damaged site, the DNA wraps around one UvrB monomer. DNA wrap is dependent on ATP binding by UvrB and probably causes local melting of the DNA helix, facilitating insertion of UvrB beta-hairpin between the DNA strands. Then UvrB probes one DNA strand for the presence of a lesion. If a lesion is found the UvrA subunits dissociate and the UvrB-DNA preincision complex is formed. This complex is subsequently bound by UvrC and the second UvrB is released. If no lesion is found, the DNA wraps around the other UvrB subunit that will check the other stand for damage. This Rickettsia felis (strain ATCC VR-1525 / URRWXCal2) (Rickettsia azadi) protein is UvrABC system protein B.